The primary structure comprises 1130 residues: Integrin alpha-6 (1130 aa).

The first 23 residues, 1–23 (MAAAGQLCLLYLSAGLLSRLGAA), serve as a signal peptide directing secretion. Residues 24–1050 (FNLDTREDNV…FPSKTVAQYS (1027 aa)) lie on the Extracellular side of the membrane. FG-GAP repeat units lie at residues 30-95 (EDNV…GPCT), 101-166 (NDAD…IEDD), 176-229 (DGRL…FFDM), 283-339 (EQPD…KSAH), 340-402 (LLPE…RWNN), 403-458 (VKPI…GINT), and 459-518 (KPTQ…VTPN). Asn78 carries N-linked (GlcNAc...) asparagine glycosylation. Cystine bridges form between Cys86–Cys94, Cys131–Cys154, and Cys175–Cys188. N-linked (GlcNAc...) asparagine glycans are attached at residues Asn223 and Asn323. The Ca(2+) site is built by Asp363, Asn365, Asp367, and Asp371. An N-linked (GlcNAc...) asparagine glycan is attached at Asn409. Asp425, Asn427, Asp429, Tyr431, Asp433, Asp480, Asp482, Asn484, Tyr486, and Asp488 together coordinate Ca(2+). 4 disulfide bridges follow: Cys528/Cys535, Cys541/Cys601, Cys665/Cys671, and Cys765/Cys776. N-linked (GlcNAc...) asparagine glycans are attached at residues Asn770, Asn787, Asn930, and Asn966. Disulfide bonds link Cys920–Cys967 and Cys973–Cys978. Asn997 carries an N-linked (GlcNAc...) asparagine glycan. A helical transmembrane segment spans residues 1051–1076 (GVPWWIILVAILAGILMLALLVFILW). A phosphoserine mark is found at Val1059 and Gly1064. Residues 1077–1083 (KCGFFKR) form an interaction with HPS5 region. Over 1077-1130 (KCGFFKRSRYDDSVPRYHAVRIRKEEREIKDEKYIDNLEKKQWITKWNENESYS) the chain is Cytoplasmic. Cys1078 carries S-palmitoyl cysteine; by DHHC3 lipidation. The short motif at 1079-1083 (GFFKR) is the GFFKR motif element. Arg1103 carries the phosphoserine modification.

This sequence belongs to the integrin alpha chain family. As to quaternary structure, heterodimer of an alpha and a beta subunit. The alpha subunit is composed of a heavy and a light chain linked by a disulfide bond. Alpha-6 associates with either beta-1 (ITGB1) or beta-4 (ITGB4) to form ITGA6:ITGB1 and ITGA6:ITGB4, respectively. ITGA6:ITGB1 is found in a complex with CD9; interaction takes place in oocytes and is involved in sperm-egg fusion. ITGA6:ITGB4 is found in a ternary complex with NRG1 and ERBB3. ITGA6:ITGB4 is found in a ternary complex with IGF1 and IGF1R. ITGA6:ITGB4 interacts with IGF2. Interacts with ADAM9. Interacts with RAB21. Interacts with MDK. ITGA6:ITGB1 interacts with MDK; this interaction mediates MDK-induced neurite outgrowth. Interacts with CD82; this interaction down-regulates ITGA6-mediated cell adhesion. Isoforms containing segment A, but not segment B, are the major targets for PMA-induced phosphorylation. Phosphorylation occurs on 'Ser-1103' of isoform alpha-6X1X2A. Phosphorylation is not required for the induction of integrin alpha-6A/beta-1 high affinity but may reduce the affinity for ligand. Post-translationally, undergoes PLAU-mediated cleavage at residues Arg-634-635-Arg in a time-dependent manner to produce processed integrin alpha-6 (alpha6p). Production of alpha6p enhances prostate cancer cell invasion and migration. In terms of processing, palmitoylation by DHHC3 enhances stability and cell surface expression. As to expression, integrin alpha-6/beta-4 is predominantly expressed by epithelia. Isoforms containing segment X1 are ubiquitously expressed. Isoforms containing segment X1X2 are expressed in heart, kidney, placenta, colon, duodenum, myoblasts and myotubes, and in a limited number of cell lines; they are always coexpressed with the ubiquitous isoform containing segment X1. In some tissues (e.g. Salivary gland), isoforms containing cytoplasmic segment A and isoforms containing segment B are detected while in others, only isoforms containing one cytoplasmic segment are found (segment A in epidermis and segment B in kidney). Processed integrin alpha-6: Expressed at low levels in normal prostate tissue with elevated levels in prostate cancer tissue (at protein level).

It localises to the cell membrane. Functionally, integrin alpha-6/beta-1 (ITGA6:ITGB1) is a receptor for laminin on platelets. Integrin alpha-6/beta-1 (ITGA6:ITGB1) is present in oocytes and is involved in sperm-egg fusion. Integrin alpha-6/beta-4 (ITGA6:ITGB4) is a receptor for laminin in epithelial cells and it plays a critical structural role in the hemidesmosome. ITGA6:ITGB4 binds to NRG1 (via EGF domain) and this binding is essential for NRG1-ERBB signaling. ITGA6:ITGB4 binds to IGF1 and this binding is essential for IGF1 signaling. ITGA6:ITGB4 binds to IGF2 and this binding is essential for IGF2 signaling. This is Integrin alpha-6 (ITGA6) from Homo sapiens (Human).